The primary structure comprises 246 residues: Transmembrane and ubiquitin-like domain-containing protein 1 (246 aa).

The interval T2–S30 is required to release iHOPS from membranes. Residues V11–T31 form a helical membrane-spanning segment. Residues A34–E101 are disordered. The segment covering L40 to S50 has biased composition (pro residues). T71 is subject to Phosphothreonine. At S73 the chain carries Phosphoserine. T92 bears the Phosphothreonine mark. A phosphoserine mark is found at S98 and S127. The 74-residue stretch at L103 to G176 folds into the Ubiquitin-like domain. 2 helical membrane-spanning segments follow: residues I195 to I215 and F221 to F241.

Interacts with EEF1A1, GRIA2, GRIP1, CAMLG, TUBG1. Interacts with NPM1 and CDKN2A; TMUB1 can enhance interaction between NPM1 and CDKN2A and is proposed to bridge the proteins; proposed to be mediated by iHOPS. Interacts with ERLIN2 and AMFR; TMUB1 promotes the interaction of ERLIN2 with AMFR. Post-translationally, processed by regulated intramembrane proteolysis (RIP)in the N-terminus to release iHOPS from membranes. Ubiquitously expressed with highest levels in mammary and thyroid glands, bone marrow and spleen; limited expression in cardiac, pancreatic and ovarian tissues.

The protein localises to the membrane. Its subcellular location is the postsynaptic cell membrane. It localises to the recycling endosome. The protein resides in the cytoplasm. It is found in the nucleus. The protein localises to the nucleolus. Its subcellular location is the cytoskeleton. It localises to the microtubule organizing center. The protein resides in the centrosome. Involved in sterol-regulated ubiquitination and degradation of HMG-CoA reductase HMGCR. Involved in positive regulation of AMPA-selective glutamate receptor GRIA2 recycling to the cell surface. Acts as a negative regulator of hepatocyte growth during regeneration. Functionally, may contribute to the regulation of translation during cell-cycle progression. May contribute to the regulation of cell proliferation. May be involved in centrosome assembly. Modulates stabilization and nucleolar localization of tumor suppressor CDKN2A and enhances association between CDKN2A and NPM1. The chain is Transmembrane and ubiquitin-like domain-containing protein 1 (TMUB1) from Homo sapiens (Human).